The following is a 331-amino-acid chain: Methionyl-tRNA formyltransferase (331 aa).

Ser-111–Pro-114 provides a ligand contact to (6S)-5,6,7,8-tetrahydrofolate.

It belongs to the Fmt family.

The catalysed reaction is L-methionyl-tRNA(fMet) + (6R)-10-formyltetrahydrofolate = N-formyl-L-methionyl-tRNA(fMet) + (6S)-5,6,7,8-tetrahydrofolate + H(+). Attaches a formyl group to the free amino group of methionyl-tRNA(fMet). The formyl group appears to play a dual role in the initiator identity of N-formylmethionyl-tRNA by promoting its recognition by IF2 and preventing the misappropriation of this tRNA by the elongation apparatus. The polypeptide is Methionyl-tRNA formyltransferase (Thermosynechococcus vestitus (strain NIES-2133 / IAM M-273 / BP-1)).